The following is a 329-amino-acid chain: DNA-directed RNA polymerase subunit alpha (329 aa).

Positions 1–234 (MQGSVTEFLR…EQLDAFVELR (234 aa)) are alpha N-terminal domain (alpha-NTD). Residues 248–329 (FDPILLRPVD…WPPASLVDDL (82 aa)) are alpha C-terminal domain (alpha-CTD).

The protein belongs to the RNA polymerase alpha chain family. As to quaternary structure, homodimer. The RNAP catalytic core consists of 2 alpha, 1 beta, 1 beta' and 1 omega subunit. When a sigma factor is associated with the core the holoenzyme is formed, which can initiate transcription.

The enzyme catalyses RNA(n) + a ribonucleoside 5'-triphosphate = RNA(n+1) + diphosphate. In terms of biological role, DNA-dependent RNA polymerase catalyzes the transcription of DNA into RNA using the four ribonucleoside triphosphates as substrates. The polypeptide is DNA-directed RNA polymerase subunit alpha (Shewanella violacea (strain JCM 10179 / CIP 106290 / LMG 19151 / DSS12)).